The following is a 291-amino-acid chain: Acetylglutamate kinase (291 aa).

Substrate is bound by residues 65–66 (GG), Arg-87, and Asn-186.

It belongs to the acetylglutamate kinase family. ArgB subfamily.

Its subcellular location is the cytoplasm. It carries out the reaction N-acetyl-L-glutamate + ATP = N-acetyl-L-glutamyl 5-phosphate + ADP. The protein operates within amino-acid biosynthesis; L-arginine biosynthesis; N(2)-acetyl-L-ornithine from L-glutamate: step 2/4. Catalyzes the ATP-dependent phosphorylation of N-acetyl-L-glutamate. The chain is Acetylglutamate kinase from Mycolicibacterium vanbaalenii (strain DSM 7251 / JCM 13017 / BCRC 16820 / KCTC 9966 / NRRL B-24157 / PYR-1) (Mycobacterium vanbaalenii).